A 218-amino-acid polypeptide reads, in one-letter code: Adenylate kinase (218 aa).

Residue 10–15 (GAGKGT) participates in ATP binding. Residues 30–59 (STGDMLRAAVKAGTPLGLEAKKVMDAGGLV) are NMP. Residues Thr31, Arg36, 57-59 (GLV), 85-88 (GFPR), and Gln92 contribute to the AMP site. The interval 122-159 (GRRVHPASGRSYHVRFNPPKAEGVDDVTGEPLVQRDDD) is LID. Residues Arg123 and 132–133 (SY) each bind ATP. AMP-binding residues include Arg156 and Arg167. Gly203 lines the ATP pocket.

The protein belongs to the adenylate kinase family. Monomer.

It localises to the cytoplasm. It carries out the reaction AMP + ATP = 2 ADP. The protein operates within purine metabolism; AMP biosynthesis via salvage pathway; AMP from ADP: step 1/1. Its function is as follows. Catalyzes the reversible transfer of the terminal phosphate group between ATP and AMP. Plays an important role in cellular energy homeostasis and in adenine nucleotide metabolism. The chain is Adenylate kinase from Bordetella bronchiseptica (strain ATCC BAA-588 / NCTC 13252 / RB50) (Alcaligenes bronchisepticus).